We begin with the raw amino-acid sequence, 192 residues long: Orotate phosphoribosyltransferase (192 aa).

116 to 124 contacts 5-phospho-alpha-D-ribose 1-diphosphate; sequence EDIVTTGLS. 2 residues coordinate orotate: T120 and R148.

It belongs to the purine/pyrimidine phosphoribosyltransferase family. PyrE subfamily. As to quaternary structure, homodimer. The cofactor is Mg(2+).

The enzyme catalyses orotidine 5'-phosphate + diphosphate = orotate + 5-phospho-alpha-D-ribose 1-diphosphate. It participates in pyrimidine metabolism; UMP biosynthesis via de novo pathway; UMP from orotate: step 1/2. In terms of biological role, catalyzes the transfer of a ribosyl phosphate group from 5-phosphoribose 1-diphosphate to orotate, leading to the formation of orotidine monophosphate (OMP). The chain is Orotate phosphoribosyltransferase from Bartonella tribocorum (strain CIP 105476 / IBS 506).